Reading from the N-terminus, the 302-residue chain is Sulfate adenylyltransferase subunit 2 (302 aa).

A disordered region spans residues 280 to 302 (RQGRVIDHDQAGSMEQKKREGYF).

Belongs to the PAPS reductase family. CysD subfamily. In terms of assembly, heterodimer composed of CysD, the smaller subunit, and CysN.

It carries out the reaction sulfate + ATP + H(+) = adenosine 5'-phosphosulfate + diphosphate. It participates in sulfur metabolism; hydrogen sulfide biosynthesis; sulfite from sulfate: step 1/3. In terms of biological role, with CysN forms the ATP sulfurylase (ATPS) that catalyzes the adenylation of sulfate producing adenosine 5'-phosphosulfate (APS) and diphosphate, the first enzymatic step in sulfur assimilation pathway. APS synthesis involves the formation of a high-energy phosphoric-sulfuric acid anhydride bond driven by GTP hydrolysis by CysN coupled to ATP hydrolysis by CysD. The chain is Sulfate adenylyltransferase subunit 2 from Hahella chejuensis (strain KCTC 2396).